Reading from the N-terminus, the 662-residue chain is DNA ligase (662 aa).

NAD(+) is bound by residues 31–35 (DKDYD) and 79–80 (SL). The active-site N6-AMP-lysine intermediate is the Lys-121. Residues Arg-143, Glu-177, and Lys-313 each contribute to the NAD(+) site. Cys-406, Cys-409, Cys-422, and Cys-428 together coordinate Zn(2+). A BRCT domain is found at 586–662 (VLESPFMGKT…LSEEEFENMI (77 aa)).

This sequence belongs to the NAD-dependent DNA ligase family. LigA subfamily. Mg(2+) is required as a cofactor. Mn(2+) serves as cofactor.

It catalyses the reaction NAD(+) + (deoxyribonucleotide)n-3'-hydroxyl + 5'-phospho-(deoxyribonucleotide)m = (deoxyribonucleotide)n+m + AMP + beta-nicotinamide D-nucleotide.. In terms of biological role, DNA ligase that catalyzes the formation of phosphodiester linkages between 5'-phosphoryl and 3'-hydroxyl groups in double-stranded DNA using NAD as a coenzyme and as the energy source for the reaction. It is essential for DNA replication and repair of damaged DNA. The sequence is that of DNA ligase from Clostridium perfringens (strain 13 / Type A).